An 80-amino-acid polypeptide reads, in one-letter code: uncharacterized protein (80 aa).

This sequence belongs to the BolA/IbaG family.

This is an uncharacterized protein from Buchnera aphidicola subsp. Acyrthosiphon pisum (strain APS) (Acyrthosiphon pisum symbiotic bacterium).